The following is a 253-amino-acid chain: Kojic acid related protein 1 (253 aa).

A run of 3 helical transmembrane segments spans residues 23–43 (PIKF…FILI), 53–73 (IFYP…YIVS), and 117–137 (ALFG…IVSV). A disordered region spans residues 174 to 253 (FPMMSPALPS…PPPPKKAAKV (80 aa)). 2 stretches are compositionally biased toward polar residues: residues 184 to 200 (GGTT…SPEF) and 226 to 240 (QQES…NQPQ). The segment covering 242–253 (YFPPPPKKAAKV) has biased composition (pro residues).

The protein localises to the membrane. In terms of biological role, involved in mycelium growth and repression of conidia formation by affecting the expression of brlA and abaA. Acts as a negative regulation factor for kojic acid production through affecting the expression of kojA, kojR and kojT. The protein is Kojic acid related protein 1 of Aspergillus oryzae (strain ATCC 42149 / RIB 40) (Yellow koji mold).